The chain runs to 90 residues: DNA/RNA-binding protein Alba (90 aa).

At lysine 11 the chain carries N6-acetyllysine.

The protein belongs to the histone-like Alba family. Acetylated. Acetylation at Lys-11 decreases DNA-binding affinity.

Its subcellular location is the cytoplasm. The protein localises to the chromosome. Binds double-stranded DNA tightly but without sequence specificity. Involved in DNA compaction. The polypeptide is DNA/RNA-binding protein Alba (Picrophilus torridus (strain ATCC 700027 / DSM 9790 / JCM 10055 / NBRC 100828 / KAW 2/3)).